The primary structure comprises 229 residues: Ribosome maturation factor RimM (229 aa).

Residues Met-1 to Asp-39 are disordered. Positions Ala-148 to Tyr-229 constitute a PRC barrel domain.

It belongs to the RimM family. As to quaternary structure, binds ribosomal protein uS19.

It is found in the cytoplasm. An accessory protein needed during the final step in the assembly of 30S ribosomal subunit, possibly for assembly of the head region. Essential for efficient processing of 16S rRNA. May be needed both before and after RbfA during the maturation of 16S rRNA. It has affinity for free ribosomal 30S subunits but not for 70S ribosomes. The protein is Ribosome maturation factor RimM of Burkholderia thailandensis (strain ATCC 700388 / DSM 13276 / CCUG 48851 / CIP 106301 / E264).